The chain runs to 201 residues: Recombination protein RecR (201 aa).

The segment at 60-75 (CHACGNVDTSDPCTIC) adopts a C4-type zinc-finger fold. The Toprim domain maps to 83 to 178 (TTLVVVEDVS…TITRLAHGVP (96 aa)).

The protein belongs to the RecR family.

Its function is as follows. May play a role in DNA repair. It seems to be involved in an RecBC-independent recombinational process of DNA repair. It may act with RecF and RecO. This Methylorubrum populi (strain ATCC BAA-705 / NCIMB 13946 / BJ001) (Methylobacterium populi) protein is Recombination protein RecR.